The chain runs to 544 residues: Chaperonin GroEL 2 (544 aa).

ATP contacts are provided by residues 30 to 33 (TLGP), 87 to 91 (DGTTT), Gly415, 480 to 482 (NAA), and Asp496.

It belongs to the chaperonin (HSP60) family. As to quaternary structure, forms a cylinder of 14 subunits composed of two heptameric rings stacked back-to-back. Interacts with the co-chaperonin GroES.

It localises to the cytoplasm. The enzyme catalyses ATP + H2O + a folded polypeptide = ADP + phosphate + an unfolded polypeptide.. Together with its co-chaperonin GroES, plays an essential role in assisting protein folding. The GroEL-GroES system forms a nano-cage that allows encapsulation of the non-native substrate proteins and provides a physical environment optimized to promote and accelerate protein folding. In Albidiferax ferrireducens (strain ATCC BAA-621 / DSM 15236 / T118) (Rhodoferax ferrireducens), this protein is Chaperonin GroEL 2.